The sequence spans 254 residues: Phosphomannomutase (254 aa).

The Nucleophile role is filled by aspartate 19. Aspartate 19 and aspartate 21 together coordinate Mg(2+). The Proton donor/acceptor role is filled by aspartate 21. Alpha-D-mannose 1-phosphate contacts are provided by arginine 28, arginine 130, arginine 141, arginine 148, serine 186, and aspartate 188. Mg(2+)-binding residues include aspartate 216, phenylalanine 228, aspartate 230, and threonine 233. Serine 240 bears the Phosphoserine mark.

The protein belongs to the eukaryotic PMM family. As to quaternary structure, homodimer.

It is found in the cytoplasm. The catalysed reaction is alpha-D-mannose 1-phosphate = D-mannose 6-phosphate. It participates in nucleotide-sugar biosynthesis; GDP-alpha-D-mannose biosynthesis; alpha-D-mannose 1-phosphate from D-fructose 6-phosphate: step 2/2. In terms of biological role, involved in the synthesis of the GDP-mannose and dolichol-phosphate-mannose required for a number of critical mannosyl transfer reactions such as folding and glycosylation of secretory proteins in the ER lumen. This chain is Phosphomannomutase, found in Saccharomyces cerevisiae (strain ATCC 204508 / S288c) (Baker's yeast).